The following is a 315-amino-acid chain: NAD kinase (315 aa).

Aspartate 91 serves as the catalytic Proton acceptor. Residues 91 to 92 (DG), arginine 96, 165 to 166 (NE), aspartate 195, and 206 to 211 (TAYAFS) contribute to the NAD(+) site.

This sequence belongs to the NAD kinase family. A divalent metal cation is required as a cofactor.

The protein resides in the cytoplasm. It carries out the reaction NAD(+) + ATP = ADP + NADP(+) + H(+). Functionally, involved in the regulation of the intracellular balance of NAD and NADP, and is a key enzyme in the biosynthesis of NADP. Catalyzes specifically the phosphorylation on 2'-hydroxyl of the adenosine moiety of NAD to yield NADP. The protein is NAD kinase of Rhodococcus erythropolis (strain PR4 / NBRC 100887).